The primary structure comprises 520 residues: UDP-N-acetylmuramoyl-L-alanyl-D-glutamate--2,6-diaminopimelate ligase (520 aa).

Leucine 48 serves as a coordination point for UDP-N-acetyl-alpha-D-muramoyl-L-alanyl-D-glutamate. Position 134 to 140 (134 to 140 (GTSGKTT)) interacts with ATP. Residues 176–177 (TT), serine 203, and arginine 211 contribute to the UDP-N-acetyl-alpha-D-muramoyl-L-alanyl-D-glutamate site. Residue lysine 243 is modified to N6-carboxylysine. Meso-2,6-diaminopimelate-binding positions include arginine 405, 429 to 432 (DNPR), glycine 483, and glutamate 487. A Meso-diaminopimelate recognition motif motif is present at residues 429 to 432 (DNPR).

The protein belongs to the MurCDEF family. MurE subfamily. Mg(2+) is required as a cofactor. Carboxylation is probably crucial for Mg(2+) binding and, consequently, for the gamma-phosphate positioning of ATP.

Its subcellular location is the cytoplasm. The catalysed reaction is UDP-N-acetyl-alpha-D-muramoyl-L-alanyl-D-glutamate + meso-2,6-diaminopimelate + ATP = UDP-N-acetyl-alpha-D-muramoyl-L-alanyl-gamma-D-glutamyl-meso-2,6-diaminopimelate + ADP + phosphate + H(+). It functions in the pathway cell wall biogenesis; peptidoglycan biosynthesis. Catalyzes the addition of meso-diaminopimelic acid to the nucleotide precursor UDP-N-acetylmuramoyl-L-alanyl-D-glutamate (UMAG) in the biosynthesis of bacterial cell-wall peptidoglycan. In Mycobacterium avium (strain 104), this protein is UDP-N-acetylmuramoyl-L-alanyl-D-glutamate--2,6-diaminopimelate ligase.